A 62-amino-acid chain; its full sequence is Short neurotoxin B (62 aa).

A compositionally biased stretch (polar residues) spans 1–16; the sequence is RRCFNHPSSQPQTNKS. The segment at 1 to 21 is disordered; it reads RRCFNHPSSQPQTNKSCPPGE. 4 disulfides stabilise this stretch: Cys3/Cys24, Cys17/Cys41, Cys43/Cys54, and Cys55/Cys60.

This sequence belongs to the three-finger toxin family. Short-chain subfamily. Type I alpha-neurotoxin sub-subfamily. In terms of tissue distribution, expressed by the venom gland.

Its subcellular location is the secreted. Functionally, binds to muscle nicotinic acetylcholine receptor (nAChR) and inhibit acetylcholine from binding to the receptor, thereby impairing neuromuscular transmission. The sequence is that of Short neurotoxin B from Laticauda crockeri (Crocker's sea snake).